Consider the following 3131-residue polypeptide: Intermembrane lipid transfer protein vps1302 (3131 aa).

Residues 2–115 form the Chorein N-terminal domain; sequence LEGLLANFLN…VLESKRRQMQ (114 aa). Basic and acidic residues predominate over residues 774–801; it reads DGKASDDDDNGDWRPESSESLDSHESEY. Residues 774 to 807 are disordered; that stretch reads DGKASDDDDNGDWRPESSESLDSHESEYKLNNTP. One can recognise an SHR-BD domain in the interval 2085–2363; that stretch reads KVMIYPPYVI…NYSWDFPILK (279 aa).

Belongs to the VPS13 family.

The protein resides in the golgi apparatus. The protein localises to the trans-Golgi network. Functionally, mediates the transfer of lipids between membranes at organelle contact sites. May play a role in mitochondrial lipid homeostasis, Golgi vesicle transport, reticulophagy, actin cytoskeleton organization and formation of the forespore membrane. In Schizosaccharomyces pombe (strain 972 / ATCC 24843) (Fission yeast), this protein is Intermembrane lipid transfer protein vps1302.